Here is a 1109-residue protein sequence, read N- to C-terminus: Carbamoyl phosphate synthase large chain (1109 aa).

The tract at residues 1–402 (MPKRTDLKSV…ALQKALRSLE (402 aa)) is carboxyphosphate synthetic domain. Arginine 129, arginine 169, glycine 175, glycine 176, glutamate 208, isoleucine 210, glutamate 215, glycine 241, valine 242, histidine 243, glutamine 285, and glutamate 299 together coordinate ATP. Positions 133–328 (KGVVERCGAE…IAKIATKLSL (196 aa)) constitute an ATP-grasp 1 domain. Residues glutamine 285, glutamate 299, and asparagine 301 each contribute to the Mg(2+) site. 3 residues coordinate Mn(2+): glutamine 285, glutamate 299, and asparagine 301. An oligomerization domain region spans residues 403-546 (QKGSQLDFSS…YHYSAYDEED (144 aa)). A carbamoyl phosphate synthetic domain region spans residues 547–950 (EVALHSKPSI…AFAKSQAGAN (404 aa)). The 192-residue stretch at 677 to 868 (SRVLDKAGLV…MAKAAALIGT (192 aa)) folds into the ATP-grasp 2 domain. Positions 713, 752, 754, 759, 784, 785, 786, 787, 827, and 839 each coordinate ATP. Mg(2+)-binding residues include glutamine 827, glutamate 839, and asparagine 841. The Mn(2+) site is built by glutamine 827, glutamate 839, and asparagine 841. The region spanning 951 to 1096 (NALPTEGKVF…QEHAAALGES (146 aa)) is the MGS-like domain. The tract at residues 951–1109 (NALPTEGKVF…AAAKADLQHA (159 aa)) is allosteric domain.

It belongs to the CarB family. As to quaternary structure, composed of two chains; the small (or glutamine) chain promotes the hydrolysis of glutamine to ammonia, which is used by the large (or ammonia) chain to synthesize carbamoyl phosphate. Tetramer of heterodimers (alpha,beta)4. The cofactor is Mg(2+). Mn(2+) serves as cofactor.

The enzyme catalyses hydrogencarbonate + L-glutamine + 2 ATP + H2O = carbamoyl phosphate + L-glutamate + 2 ADP + phosphate + 2 H(+). It catalyses the reaction hydrogencarbonate + NH4(+) + 2 ATP = carbamoyl phosphate + 2 ADP + phosphate + 2 H(+). It functions in the pathway amino-acid biosynthesis; L-arginine biosynthesis; carbamoyl phosphate from bicarbonate: step 1/1. Its pathway is pyrimidine metabolism; UMP biosynthesis via de novo pathway; (S)-dihydroorotate from bicarbonate: step 1/3. Functionally, large subunit of the glutamine-dependent carbamoyl phosphate synthetase (CPSase). CPSase catalyzes the formation of carbamoyl phosphate from the ammonia moiety of glutamine, carbonate, and phosphate donated by ATP, constituting the first step of 2 biosynthetic pathways, one leading to arginine and/or urea and the other to pyrimidine nucleotides. The large subunit (synthetase) binds the substrates ammonia (free or transferred from glutamine from the small subunit), hydrogencarbonate and ATP and carries out an ATP-coupled ligase reaction, activating hydrogencarbonate by forming carboxy phosphate which reacts with ammonia to form carbamoyl phosphate. The chain is Carbamoyl phosphate synthase large chain from Pseudarthrobacter chlorophenolicus (strain ATCC 700700 / DSM 12829 / CIP 107037 / JCM 12360 / KCTC 9906 / NCIMB 13794 / A6) (Arthrobacter chlorophenolicus).